The following is a 319-amino-acid chain: D-alanine--D-alanine ligase (319 aa).

The 196-residue stretch at 120-315 (KRVLAQAGVP…YPELLRRLVE (196 aa)) folds into the ATP-grasp domain. Residue 147–198 (DPPFFVKPANTGSSVGISRVERFQDLEAALALAFRYDEKAVVEKALSPVREL) participates in ATP binding. Residues aspartate 270, glutamate 282, and asparagine 284 each contribute to the Mg(2+) site.

The protein belongs to the D-alanine--D-alanine ligase family. Mg(2+) is required as a cofactor. Requires Mn(2+) as cofactor.

The protein resides in the cytoplasm. It carries out the reaction 2 D-alanine + ATP = D-alanyl-D-alanine + ADP + phosphate + H(+). Its pathway is cell wall biogenesis; peptidoglycan biosynthesis. Its function is as follows. Cell wall formation. This Thermus thermophilus (strain ATCC 27634 / DSM 579 / HB8) protein is D-alanine--D-alanine ligase.